Here is a 166-residue protein sequence, read N- to C-terminus: Ribosome maturation factor RimP (166 aa).

Belongs to the RimP family.

It is found in the cytoplasm. Functionally, required for maturation of 30S ribosomal subunits. This is Ribosome maturation factor RimP from Rickettsia akari (strain Hartford).